The primary structure comprises 337 residues: ATP-dependent 6-phosphofructokinase (337 aa).

Glycine 11 is an ATP binding site. 21 to 25 (RAVVR) provides a ligand contact to ADP. Residues 72-73 (RY) and 102-105 (GDGS) contribute to the ATP site. Position 103 (aspartate 103) interacts with Mg(2+). 125 to 127 (TID) contributes to the substrate binding site. Aspartate 127 (proton acceptor) is an active-site residue. Arginine 154 is a binding site for ADP. Residues arginine 162 and 169–171 (MGR) contribute to the substrate site. ADP is bound by residues 185–187 (GAD) and 214–216 (KNH). Substrate-binding positions include glutamate 223, arginine 245, and 251–254 (HILR).

The protein belongs to the phosphofructokinase type A (PFKA) family. ATP-dependent PFK group I subfamily. Prokaryotic clade 'B1' sub-subfamily. As to quaternary structure, homotetramer. The cofactor is Mg(2+).

The protein localises to the cytoplasm. It catalyses the reaction beta-D-fructose 6-phosphate + ATP = beta-D-fructose 1,6-bisphosphate + ADP + H(+). Its pathway is carbohydrate degradation; glycolysis; D-glyceraldehyde 3-phosphate and glycerone phosphate from D-glucose: step 3/4. Allosterically activated by ADP and other diphosphonucleosides, and allosterically inhibited by phosphoenolpyruvate. Functionally, catalyzes the phosphorylation of D-fructose 6-phosphate to fructose 1,6-bisphosphate by ATP, the first committing step of glycolysis. The protein is ATP-dependent 6-phosphofructokinase of Streptococcus uberis (strain ATCC BAA-854 / 0140J).